The chain runs to 187 residues: Peptidyl-tRNA hydrolase (187 aa).

A tRNA-binding site is contributed by tyrosine 18. Histidine 23 functions as the Proton acceptor in the catalytic mechanism. Phenylalanine 65, asparagine 67, and asparagine 113 together coordinate tRNA.

Belongs to the PTH family. As to quaternary structure, monomer.

Its subcellular location is the cytoplasm. It catalyses the reaction an N-acyl-L-alpha-aminoacyl-tRNA + H2O = an N-acyl-L-amino acid + a tRNA + H(+). In terms of biological role, hydrolyzes ribosome-free peptidyl-tRNAs (with 1 or more amino acids incorporated), which drop off the ribosome during protein synthesis, or as a result of ribosome stalling. Catalyzes the release of premature peptidyl moieties from peptidyl-tRNA molecules trapped in stalled 50S ribosomal subunits, and thus maintains levels of free tRNAs and 50S ribosomes. In Coxiella burnetii (strain CbuG_Q212) (Coxiella burnetii (strain Q212)), this protein is Peptidyl-tRNA hydrolase.